The following is a 684-amino-acid chain: Agnestins biosynthesis cluster transcription factor AgnL11 (684 aa).

The segment at residues 25–51 (CHFCRTKKLKCDRRFPCSNCRARRLSC) is a DNA-binding region (zn(2)-C6 fungal-type). Positions 76–103 (NEELSENINELKARLQRLEELISVNAEE) form a coiled coil. A disordered region spans residues 601–644 (KGSASARKDKNPIHGDTDRATPPGSSNLPQHDKSSSSSPAPPVW). Residues 606-619 (ARKDKNPIHGDTDR) show a composition bias toward basic and acidic residues.

It localises to the nucleus. Transcription factor that regulates the expression of the gene cluster that mediates the biosynthesis of agnestins, dihydroxy-xanthone metabolites. This is Agnestins biosynthesis cluster transcription factor AgnL11 from Paecilomyces divaricatus (Penicillium divaricatum).